The following is a 350-amino-acid chain: Probable poly-beta-1,6-N-acetyl-D-glucosamine export protein (350 aa).

10 helical membrane-spanning segments follow: residues 7 to 29 (ELVYLRAIICAIIIITHLLTQIT), 44 to 66 (FYIRNIVIFGTPCFIILSQLLTT), 79 to 101 (TRVKYILIPYILMGLFYSYSESL), 116 to 138 (LLGQWYGYFIVVIMQFFILSYII), 145 to 167 (LFNSKILLLLSFILQQSFLYYFT), 187 to 204 (IIFGWIFYFFLGAYMGYN), 211 to 233 (FLERYLVIMIVLAVATYFVFIAL), 243 to 262 (SFSYSLTPYNSIMFIVILGI), 269 to 291 (ILFNTIQMISAFSFFIYLLHPII), and 306 to 328 (TMVFLAISLLFILGLCIGVGMIL).

The protein belongs to the acyltransferase 3 family.

Its subcellular location is the cell membrane. Its function is as follows. Presumably involved in the export of the biofilm adhesin polysaccharide poly-beta-1,6-N-acetyl-D-glucosamine (PNAG, also referred to as PIA) across the cell membrane. This chain is Probable poly-beta-1,6-N-acetyl-D-glucosamine export protein (icaC), found in Staphylococcus aureus (strain Mu50 / ATCC 700699).